Reading from the N-terminus, the 65-residue chain is Omega-lycotoxin-Am1f (65 aa).

A propeptide spanning residues 1 to 18 (GDEEDEVEETLPVAEEGR) is cleaved from the precursor. Cystine bridges form between C22/C37, C29/C42, C36/C62, and C44/C60.

It belongs to the neurotoxin omega-lctx family. In terms of tissue distribution, expressed by the venom gland.

It localises to the secreted. In terms of biological role, modulates Cav2.1/CACNA1A voltage-gated calcium channels (P/Q-type currents) in rat cerebellar Purkinje cells and hippocampal CA1-CA3 neurons. At saturating concentrations (&gt;10 nM) decelerates activation kinetics and slightly increases peak amplitude without affecting deactivation kinetics. In vivo, does not cause death when intravenously injected into mice. In rat models, through its activity on Cav2.1/CACNA1A, has an ameliorative effect on memory defects provoked by hyperstimulation of N-methyl-D-aspartate receptors (NMDARs) in the hippocampus. The sequence is that of Omega-lycotoxin-Am1f from Alopecosa marikovskyi (Wolf spider).